The primary structure comprises 507 residues: Ribose import ATP-binding protein RbsA (507 aa).

ABC transporter domains are found at residues 7–242 (LEMR…VGRP) and 253–497 (IPLG…TGVT). An ATP-binding site is contributed by 39–46 (GENGAGKS).

The protein belongs to the ABC transporter superfamily. Ribose importer (TC 3.A.1.2.1) family. In terms of assembly, the complex is composed of an ATP-binding protein (RbsA), two transmembrane proteins (RbsC) and a solute-binding protein (RbsB).

The protein localises to the cell inner membrane. The catalysed reaction is D-ribose(out) + ATP + H2O = D-ribose(in) + ADP + phosphate + H(+). Its function is as follows. Part of the ABC transporter complex RbsABC involved in ribose import. Responsible for energy coupling to the transport system. The polypeptide is Ribose import ATP-binding protein RbsA (Yersinia pestis bv. Antiqua (strain Antiqua)).